Consider the following 1342-residue polypeptide: DNA-directed RNA polymerase subunit beta (1342 aa).

It belongs to the RNA polymerase beta chain family. As to quaternary structure, the RNAP catalytic core consists of 2 alpha, 1 beta, 1 beta' and 1 omega subunit. When a sigma factor is associated with the core the holoenzyme is formed, which can initiate transcription.

It catalyses the reaction RNA(n) + a ribonucleoside 5'-triphosphate = RNA(n+1) + diphosphate. In terms of biological role, DNA-dependent RNA polymerase catalyzes the transcription of DNA into RNA using the four ribonucleoside triphosphates as substrates. The sequence is that of DNA-directed RNA polymerase subunit beta from Pasteurella multocida (strain Pm70).